The primary structure comprises 647 residues: Exoribonuclease 2 (647 aa).

The RNB domain occupies 192–520; it reads REDLTALSFV…NHRLLKAIIS (329 aa). The S1 motif domain maps to 565 to 647; it reads ESTFNAEIID…ETRNIVARPI (83 aa).

Belongs to the RNR ribonuclease family. RNase II subfamily.

It localises to the cytoplasm. The catalysed reaction is Exonucleolytic cleavage in the 3'- to 5'-direction to yield nucleoside 5'-phosphates.. Its function is as follows. Involved in mRNA degradation. Hydrolyzes single-stranded polyribonucleotides processively in the 3' to 5' direction. This chain is Exoribonuclease 2, found in Proteus mirabilis (strain HI4320).